The primary structure comprises 339 residues: 4-hydroxy-2-oxovalerate aldolase (339 aa).

Positions 7 to 257 (IRIMDTTLRD…QVGVDLYKIM (251 aa)) constitute a Pyruvate carboxyltransferase domain. A substrate-binding site is contributed by 15–16 (RD). Asp16 serves as a coordination point for Mn(2+). The active-site Proton acceptor is the His19. The substrate site is built by Ser169 and His196. Mn(2+) contacts are provided by His196 and His198. Tyr286 lines the substrate pocket.

This sequence belongs to the 4-hydroxy-2-oxovalerate aldolase family.

The catalysed reaction is (S)-4-hydroxy-2-oxopentanoate = acetaldehyde + pyruvate. The protein is 4-hydroxy-2-oxovalerate aldolase of Pelotomaculum thermopropionicum (strain DSM 13744 / JCM 10971 / SI).